We begin with the raw amino-acid sequence, 296 residues long: Lipoyl synthase (296 aa).

Positions 37, 42, 48, 63, 67, 70, and 276 each coordinate [4Fe-4S] cluster. The region spanning 49 to 265 (WSKKHTTVMI…ERVAKTKGFL (217 aa)) is the Radical SAM core domain.

This sequence belongs to the radical SAM superfamily. Lipoyl synthase family. The cofactor is [4Fe-4S] cluster.

The protein localises to the cytoplasm. It carries out the reaction [[Fe-S] cluster scaffold protein carrying a second [4Fe-4S](2+) cluster] + N(6)-octanoyl-L-lysyl-[protein] + 2 oxidized [2Fe-2S]-[ferredoxin] + 2 S-adenosyl-L-methionine + 4 H(+) = [[Fe-S] cluster scaffold protein] + N(6)-[(R)-dihydrolipoyl]-L-lysyl-[protein] + 4 Fe(3+) + 2 hydrogen sulfide + 2 5'-deoxyadenosine + 2 L-methionine + 2 reduced [2Fe-2S]-[ferredoxin]. Its pathway is protein modification; protein lipoylation via endogenous pathway; protein N(6)-(lipoyl)lysine from octanoyl-[acyl-carrier-protein]: step 2/2. Catalyzes the radical-mediated insertion of two sulfur atoms into the C-6 and C-8 positions of the octanoyl moiety bound to the lipoyl domains of lipoate-dependent enzymes, thereby converting the octanoylated domains into lipoylated derivatives. In Rickettsia massiliae (strain Mtu5), this protein is Lipoyl synthase.